Consider the following 101-residue polypeptide: NADH-quinone oxidoreductase subunit K (101 aa).

The next 3 helical transmembrane spans lie at 4 to 24 (LGHYLTLGAILFALSVIGIFL), 30 to 50 (IVLLMCIELMLLAVNLNFVAF), and 61 to 81 (VFVFFILTVAAAESAIGLAIL).

The protein belongs to the complex I subunit 4L family. As to quaternary structure, NDH-1 is composed of 14 different subunits. Subunits NuoA, H, J, K, L, M, N constitute the membrane sector of the complex.

The protein localises to the cell inner membrane. It carries out the reaction a quinone + NADH + 5 H(+)(in) = a quinol + NAD(+) + 4 H(+)(out). NDH-1 shuttles electrons from NADH, via FMN and iron-sulfur (Fe-S) centers, to quinones in the respiratory chain. The immediate electron acceptor for the enzyme in this species is believed to be ubiquinone. Couples the redox reaction to proton translocation (for every two electrons transferred, four hydrogen ions are translocated across the cytoplasmic membrane), and thus conserves the redox energy in a proton gradient. This chain is NADH-quinone oxidoreductase subunit K, found in Leptothrix cholodnii (strain ATCC 51168 / LMG 8142 / SP-6) (Leptothrix discophora (strain SP-6)).